The following is a 161-amino-acid chain: Regulator of ribonuclease activity A (161 aa).

This sequence belongs to the RraA family. Homotrimer. Binds to both RNA-binding sites in the C-terminal region of Rne and to RhlB.

The protein localises to the cytoplasm. Its function is as follows. Globally modulates RNA abundance by binding to RNase E (Rne) and regulating its endonucleolytic activity. Can modulate Rne action in a substrate-dependent manner by altering the composition of the degradosome. Modulates RNA-binding and helicase activities of the degradosome. The sequence is that of Regulator of ribonuclease activity A from Idiomarina loihiensis (strain ATCC BAA-735 / DSM 15497 / L2-TR).